A 575-amino-acid polypeptide reads, in one-letter code: Inactive terpenoid synthase 20, chloroplastic (575 aa).

Residues 1–52 constitute a chloroplast transit peptide; the sequence is MEAITKNGSLSQTLVHCGPKSLSSFIPVRCLRFSKNPFPKKLVVTRARTSIN. Mg(2+) contacts are provided by Asp332, Asp336, Asp474, Thr478, and Glu482. A DDXXD motif motif is present at residues 332–336; that stretch reads DDLYD.

This sequence belongs to the terpene synthase family. Tpsa subfamily. As to expression, predominantly expressed in roots but also in leaves and stems.

It is found in the plastid. The protein resides in the chloroplast. Functionally, does not possess diterpene synthase activity. This Arabidopsis thaliana (Mouse-ear cress) protein is Inactive terpenoid synthase 20, chloroplastic.